The sequence spans 396 residues: Flavohemoprotein (396 aa).

The Globin domain occupies 1–136; the sequence is MLDAQTIATV…LANVFIHREA (136 aa). Position 85 (H85) interacts with heme b. Catalysis depends on charge relay system residues Y95 and E135. The reductase stretch occupies residues 147 to 396; the sequence is GGWEGTRPFR…YECFGPHKVL (250 aa). The FAD-binding FR-type domain occupies 150 to 255; it reads EGTRPFRIVA…AAPAGDFFMN (106 aa). FAD contacts are provided by residues Y188 and 204-207; that span reads RQYS. An NADP(+)-binding site is contributed by 268-273; it reads GVGQTP. Residue 389–392 coordinates FAD; that stretch reads CFGP.

It belongs to the globin family. Two-domain flavohemoproteins subfamily. The protein in the C-terminal section; belongs to the flavoprotein pyridine nucleotide cytochrome reductase family. As to quaternary structure, monomer. It depends on heme b as a cofactor. Requires FAD as cofactor.

The catalysed reaction is 2 nitric oxide + NADPH + 2 O2 = 2 nitrate + NADP(+) + H(+). It carries out the reaction 2 nitric oxide + NADH + 2 O2 = 2 nitrate + NAD(+) + H(+). In terms of biological role, is involved in NO detoxification in an aerobic process, termed nitric oxide dioxygenase (NOD) reaction that utilizes O(2) and NAD(P)H to convert NO to nitrate, which protects the bacterium from various noxious nitrogen compounds. Therefore, plays a central role in the inducible response to nitrosative stress. This chain is Flavohemoprotein (hmp), found in Salmonella typhimurium (strain LT2 / SGSC1412 / ATCC 700720).